A 682-amino-acid chain; its full sequence is Serine/threonine-protein kinase PAK 6 (682 aa).

Disordered stretches follow at residues 1–30 (MFRKKKKKRPEISAPQNFQHRVHTSFDPKE), 132–170 (SPQSEHTDPHGLYLSCNGGTPAGHRQVPWPEPQSPQALP), 200–256 (LQSS…QESS), and 270–367 (PATG…NLYL). A CRIB domain is found at 12–25 (ISAPQNFQHRVHTS). Positions 26-407 (FDPKEGKFVG…VVDQGDPRLL (382 aa)) are linker. Composition is skewed to polar residues over residues 270 to 279 (PATGAASSSK) and 297 to 334 (KDSSSNLVAKAQSLPSEQPMGTFSPLTTSDTSSPQKSL). The region spanning 408-659 (LDSYVKIGEG…AQELLDHPFL (252 aa)) is the Protein kinase domain. ATP is bound by residues 414-422 (IGEGSTGIV) and Lys-437. Residue Asp-527 is the Proton acceptor of the active site. A Phosphoserine; by autocatalysis modification is found at Ser-561.

It belongs to the protein kinase superfamily. STE Ser/Thr protein kinase family. STE20 subfamily. As to quaternary structure, interacts tightly with GTP-bound but not GDP-bound CDC42/p21 and RAC1. Interacts with the androgen receptor AR. Interacts with IQGAP1 and PPM1B. Post-translationally, autophosphorylated. Phosphorylated by MAP2K6/MAPKK6, leading to PAK6 activation.

It is found in the cytoplasm. Its subcellular location is the nucleus. The catalysed reaction is L-seryl-[protein] + ATP = O-phospho-L-seryl-[protein] + ADP + H(+). It catalyses the reaction L-threonyl-[protein] + ATP = O-phospho-L-threonyl-[protein] + ADP + H(+). Functionally, serine/threonine protein kinase that plays a role in the regulation of gene transcription. The kinase activity is induced by various effectors including AR or MAP2K6/MAPKK6. Phosphorylates the DNA-binding domain of androgen receptor/AR and thereby inhibits AR-mediated transcription. Also inhibits ESR1-mediated transcription. May play a role in cytoskeleton regulation by interacting with IQGAP1. May protect cells from apoptosis through phosphorylation of BAD. This is Serine/threonine-protein kinase PAK 6 (Pak6) from Mus musculus (Mouse).